A 151-amino-acid polypeptide reads, in one-letter code: Macrodomain Ter protein (151 aa).

This sequence belongs to the MatP family. In terms of assembly, homodimer.

It localises to the cytoplasm. Functionally, required for spatial organization of the terminus region of the chromosome (Ter macrodomain) during the cell cycle. Prevents early segregation of duplicated Ter macrodomains during cell division. Binds specifically to matS, which is a 13 bp signature motif repeated within the Ter macrodomain. The sequence is that of Macrodomain Ter protein from Enterobacter sp. (strain 638).